We begin with the raw amino-acid sequence, 313 residues long: Glutathione synthetase (313 aa).

Positions 125 to 309 (KLFVMDFTEL…IAAKIWDVIE (185 aa)) constitute an ATP-grasp domain. 151 to 207 (RAEHGAVVMKPLHGHGGAAVFRVLPQDINFGSLYDMFAVTFREPWVIQRFLPEVKHG) serves as a coordination point for ATP. 2 residues coordinate Mg(2+): Glu280 and Asn282.

It belongs to the prokaryotic GSH synthase family. It depends on Mg(2+) as a cofactor. Requires Mn(2+) as cofactor.

It catalyses the reaction gamma-L-glutamyl-L-cysteine + glycine + ATP = glutathione + ADP + phosphate + H(+). Its pathway is sulfur metabolism; glutathione biosynthesis; glutathione from L-cysteine and L-glutamate: step 2/2. The sequence is that of Glutathione synthetase from Rhodopseudomonas palustris (strain ATCC BAA-98 / CGA009).